Here is a 660-residue protein sequence, read N- to C-terminus: Glycine betaine transporter (660 aa).

Residues 1 to 13 (MPSKTSSRFANIN) are Cytoplasmic-facing. Residues 14–34 (PNVFVSTIMIIAIFLAIVILA) traverse the membrane as a helical segment. Residues 35-52 (PDAFELLTQQLKNWITES) lie on the Periplasmic side of the membrane. A helical transmembrane segment spans residues 53–73 (FSWFYVLSVAFFLIVLGYIAC). Residues 74-93 (SSSGKIKLGPDHSQPDYSNS) lie on the Cytoplasmic side of the membrane. Residues 94 to 114 (SWFAMLFTAGMGIGLMFFGIA) traverse the membrane as a helical segment. Residues 115-139 (EPIMHYVSPPSGEPETILAAQQSMR) lie on the Periplasmic side of the membrane. The helical transmembrane segment at 140 to 160 (VTFFHWGLHAWGIYAIVALSL) threads the bilayer. Topologically, residues 161–195 (SYFAYRHDLPLKIRSSLYPLIGKKIYGPMGDAVDT) are cytoplasmic. A helical transmembrane segment spans residues 196–216 (FATIGTIFGVATTLGFGVTQI). Residues 217–230 (SSGLNYLFGFEPTS) lie on the Periplasmic side of the membrane. Residues 231-251 (FSKVVLIIIVSAMAALSVGLG) form a helical membrane-spanning segment. At 252 to 263 (LDKGVKRLAELN) the chain is on the cytoplasmic side. The chain crosses the membrane as a helical span at residues 264–284 (LVLAVTLLAFVFFTSATVYLL). Residues 285–316 (QTTIQNTGQYISNLFEMTFNLYAYQPNGWIGG) lie on the Periplasmic side of the membrane. A helical membrane pass occupies residues 317–337 (WTIMYWAWWISWSPFVGMFIA). Topologically, residues 338–347 (RVSRGRTIRE) are cytoplasmic. Residues 348–368 (FIIGVMLIPTGFTLIWMGFMG) traverse the membrane as a helical segment. The Periplasmic segment spans residues 369-401 (NAGLYSILHDGNLSLLNAVQRDSSVALFEFLHS). Residues 402-422 (LPFSGVMSLLATVLVVLFFVT) traverse the membrane as a helical segment. Topologically, residues 423-446 (SADSGALVVDYLTAKSEDSPVWQR) are cytoplasmic. The helical transmembrane segment at 447-467 (LFWIVVMAGLAIILLLAGGLT) threads the bilayer. Over 468–471 (ALQS) the chain is Periplasmic. A helical membrane pass occupies residues 472-492 (ATIMSALPFTFIMLLICWGLI). Residues 493–660 (KALRIDSTKM…LSVMRAQTGN (168 aa)) are Cytoplasmic-facing.

It belongs to the BCCT transporter (TC 2.A.15) family.

It is found in the cell inner membrane. Uptake is activated by NaCl, KCl or mannose gradients across the cell membrane. Inhibited by the protonophore 3,3',4',5-tetrachlorosalicylanilide (TCS). Energy-dependent uptake of glycine betaine in response to high salinity. This chain is Glycine betaine transporter, found in Acinetobacter baylyi (strain ATCC 33305 / BD413 / ADP1).